Here is a 248-residue protein sequence, read N- to C-terminus: tRNA pseudouridine synthase A (248 aa).

Aspartate 53 functions as the Nucleophile in the catalytic mechanism. Substrate is bound at residue tyrosine 111.

This sequence belongs to the tRNA pseudouridine synthase TruA family. In terms of assembly, homodimer.

It catalyses the reaction uridine(38/39/40) in tRNA = pseudouridine(38/39/40) in tRNA. Formation of pseudouridine at positions 38, 39 and 40 in the anticodon stem and loop of transfer RNAs. The protein is tRNA pseudouridine synthase A of Listeria monocytogenes serotype 4b (strain CLIP80459).